The following is an 85-amino-acid chain: Oxytocin-neurophysin 1 (85 aa).

Gly-3 is modified (glycine amide). 6 disulfide bridges follow: Cys-16–Cys-60, Cys-19–Cys-33, Cys-27–Cys-50, Cys-34–Cys-40, Cys-67–Cys-79, and Cys-80–Cys-85.

The protein belongs to the vasopressin/oxytocin family. In terms of assembly, interacts with oxytocin receptor (Ki=1.5 nM). Interacts with vasopressin V1aR/AVPR1A (Ki=37 nM), V1bR/AVPR1B (Ki=222 nM), and V2R/AVPR2 receptors (Ki=823 nM).

Neurophysin 1 specifically binds oxytocin. Its function is as follows. Oxytocin causes contraction of the smooth muscle of the uterus and of the mammary gland. Acts by binding to oxytocin receptor (OXTR). The protein is Oxytocin-neurophysin 1 (OXT) of Papio hamadryas (Hamadryas baboon).